Consider the following 98-residue polypeptide: MRTFLVTFVLVVVVGVISAYPSNPVEVEAEDFDAQDPDLQTFQDTFYEVPQVHSRQKRATCDLLSAFGVGHAACAAHCIGHGYRGGYCNSKAVCTCRR.

The N-terminal stretch at 1 to 19 (MRTFLVTFVLVVVVGVISA) is a signal peptide. The propeptide occupies 20-58 (YPSNPVEVEAEDFDAQDPDLQTFQDTFYEVPQVHSRQKR). 3 disulfides stabilise this stretch: cysteine 61-cysteine 88, cysteine 74-cysteine 94, and cysteine 78-cysteine 96.

In terms of tissue distribution, is synthesized by the fat body and eventually secreted into the hemolymph.

The protein localises to the secreted. Its function is as follows. Has antiparasitic activity against promastigote forms of L.major, and antibacterial activity against Gram-positive bacterium S.aureus. Has antifungal activity against the yeasts C.albicans and S.cerevisiae, but not C.glabrata. Has antifungal activity against filamentous fungi A.fumigatus, F.culmorum, F.oxysporum, N.crassa, T.viride and T.mentagrophytes, but not B.bassiana. This chain is Defensin, found in Phlebotomus duboscqi (Sandfly).